The sequence spans 251 residues: uncharacterized protein (251 aa).

Belongs to the FAM243 family.

This is an uncharacterized protein from Bos taurus (Bovine).